Here is a 54-residue protein sequence, read N- to C-terminus: ATP synthase F(0) complex subunit 8 (54 aa).

Residues 8–24 (PWFSIMLLTWFTFSLLI) traverse the membrane as a helical segment.

It belongs to the ATPase protein 8 family. As to quaternary structure, component of the ATP synthase complex composed at least of ATP5F1A/subunit alpha, ATP5F1B/subunit beta, ATP5MC1/subunit c (homooctomer), MT-ATP6/subunit a, MT-ATP8/subunit 8, ATP5ME/subunit e, ATP5MF/subunit f, ATP5MG/subunit g, ATP5MK/subunit k, ATP5MJ/subunit j, ATP5F1C/subunit gamma, ATP5F1D/subunit delta, ATP5F1E/subunit epsilon, ATP5PF/subunit F6, ATP5PB/subunit b, ATP5PD/subunit d, ATP5PO/subunit OSCP. ATP synthase complex consists of a soluble F(1) head domain (subunits alpha(3) and beta(3)) - the catalytic core - and a membrane F(0) domain - the membrane proton channel (subunits c, a, 8, e, f, g, k and j). These two domains are linked by a central stalk (subunits gamma, delta, and epsilon) rotating inside the F1 region and a stationary peripheral stalk (subunits F6, b, d, and OSCP).

It localises to the mitochondrion membrane. Subunit 8, of the mitochondrial membrane ATP synthase complex (F(1)F(0) ATP synthase or Complex V) that produces ATP from ADP in the presence of a proton gradient across the membrane which is generated by electron transport complexes of the respiratory chain. ATP synthase complex consist of a soluble F(1) head domain - the catalytic core - and a membrane F(1) domain - the membrane proton channel. These two domains are linked by a central stalk rotating inside the F(1) region and a stationary peripheral stalk. During catalysis, ATP synthesis in the catalytic domain of F(1) is coupled via a rotary mechanism of the central stalk subunits to proton translocation. In vivo, can only synthesize ATP although its ATP hydrolase activity can be activated artificially in vitro. Part of the complex F(0) domain. The polypeptide is ATP synthase F(0) complex subunit 8 (Gallus gallus (Chicken)).